Here is a 597-residue protein sequence, read N- to C-terminus: Arginine--tRNA ligase (597 aa).

Positions 138–148 (ANPTGPMHVGH) match the 'HIGH' region motif.

The protein belongs to the class-I aminoacyl-tRNA synthetase family. As to quaternary structure, monomer.

The protein localises to the cytoplasm. It catalyses the reaction tRNA(Arg) + L-arginine + ATP = L-arginyl-tRNA(Arg) + AMP + diphosphate. The sequence is that of Arginine--tRNA ligase from Nitrobacter winogradskyi (strain ATCC 25391 / DSM 10237 / CIP 104748 / NCIMB 11846 / Nb-255).